A 1939-amino-acid polypeptide reads, in one-letter code: Myosin-6 (1939 aa).

The 50-residue stretch at 32-81 (DIRTECFVPDDKEEFVKAKIVSREGGKVTAETENGKTVTVKEDQVMQQNP) folds into the Myosin N-terminal SH3-like domain. The region spanning 85-780 (DKIEDMAMLT…LLGLLEEMRD (696 aa)) is the Myosin motor domain. N6,N6,N6-trimethyllysine is present on Lys-129. Residue 178-185 (GESGAGKT) coordinates ATP. Thr-379 is subject to Phosphothreonine. Ser-417 is modified (phosphoserine). 2 actin-binding regions span residues 657–679 (LNKL…IPNE) and 759–773 (KFGH…GLLG). Positions 783-812 (LSRIITRIQAQARGQLMRIEFKKMVERRDA) constitute an IQ domain. A coiled-coil region spans residues 842–1939 (LKSAETEKEM…GAKQKMHDEE (1098 aa)). Residues Ser-1090 and Ser-1139 each carry the phosphoserine modification. Phosphotyrosine is present on Tyr-1261. Ser-1271 is modified (phosphoserine). Phosphothreonine occurs at positions 1277 and 1284. Phosphoserine is present on Ser-1309. Tyr-1310 bears the Phosphotyrosine mark. Thr-1311 carries the post-translational modification Phosphothreonine. Position 1512 is a phosphoserine (Ser-1512). Residues Thr-1515 and Thr-1681 each carry the phosphothreonine modification. Residues 1908–1939 (AEERADIAESQVNKLRAKSRDIGAKQKMHDEE) form a disordered region. A compositionally biased stretch (basic and acidic residues) spans 1925 to 1939 (KSRDIGAKQKMHDEE).

It belongs to the TRAFAC class myosin-kinesin ATPase superfamily. Myosin family. As to quaternary structure, muscle myosin is a hexameric protein that consists of 2 heavy chain subunits (MHC), 2 alkali light chain subunits (MLC) and 2 regulatory light chain subunits (MLC-2).

The protein localises to the cytoplasm. Its subcellular location is the myofibril. Muscle contraction. The chain is Myosin-6 (MYH6) from Mesocricetus auratus (Golden hamster).